Consider the following 135-residue polypeptide: Nucleoside diphosphate kinase (135 aa).

ATP is bound by residues Lys11, Phe59, Arg87, Thr93, Arg104, and Asn114. Catalysis depends on His117, which acts as the Pros-phosphohistidine intermediate.

It belongs to the NDK family. As to quaternary structure, homotetramer. Mg(2+) is required as a cofactor.

Its subcellular location is the cytoplasm. It catalyses the reaction a 2'-deoxyribonucleoside 5'-diphosphate + ATP = a 2'-deoxyribonucleoside 5'-triphosphate + ADP. The enzyme catalyses a ribonucleoside 5'-diphosphate + ATP = a ribonucleoside 5'-triphosphate + ADP. Its function is as follows. Major role in the synthesis of nucleoside triphosphates other than ATP. The ATP gamma phosphate is transferred to the NDP beta phosphate via a ping-pong mechanism, using a phosphorylated active-site intermediate. The chain is Nucleoside diphosphate kinase from Marinomonas sp. (strain MWYL1).